We begin with the raw amino-acid sequence, 230 residues long: Large ribosomal subunit protein uL1 (230 aa).

This sequence belongs to the universal ribosomal protein uL1 family. In terms of assembly, part of the 50S ribosomal subunit.

Functionally, binds directly to 23S rRNA. The L1 stalk is quite mobile in the ribosome, and is involved in E site tRNA release. Protein L1 is also a translational repressor protein, it controls the translation of the L11 operon by binding to its mRNA. The sequence is that of Large ribosomal subunit protein uL1 from Acidiphilium cryptum (strain JF-5).